A 287-amino-acid chain; its full sequence is ATP synthase gamma chain (287 aa).

The protein belongs to the ATPase gamma chain family. As to quaternary structure, F-type ATPases have 2 components, CF(1) - the catalytic core - and CF(0) - the membrane proton channel. CF(1) has five subunits: alpha(3), beta(3), gamma(1), delta(1), epsilon(1). CF(0) has three main subunits: a, b and c.

It localises to the cell inner membrane. Produces ATP from ADP in the presence of a proton gradient across the membrane. The gamma chain is believed to be important in regulating ATPase activity and the flow of protons through the CF(0) complex. This Geotalea daltonii (strain DSM 22248 / JCM 15807 / FRC-32) (Geobacter daltonii) protein is ATP synthase gamma chain.